The chain runs to 186 residues: Imidazoleglycerol-phosphate dehydratase (186 aa).

Belongs to the imidazoleglycerol-phosphate dehydratase family.

It localises to the cytoplasm. It catalyses the reaction D-erythro-1-(imidazol-4-yl)glycerol 3-phosphate = 3-(imidazol-4-yl)-2-oxopropyl phosphate + H2O. Its pathway is amino-acid biosynthesis; L-histidine biosynthesis; L-histidine from 5-phospho-alpha-D-ribose 1-diphosphate: step 6/9. The chain is Imidazoleglycerol-phosphate dehydratase from Dictyoglomus turgidum (strain DSM 6724 / Z-1310).